Consider the following 537-residue polypeptide: Phosphoenolpyruvate carboxykinase (ATP) (537 aa).

Residues arginine 61, tyrosine 195, and lysine 201 each coordinate substrate. ATP-binding positions include lysine 201, histidine 220, and 236–244 (GLSGTGKTT). Mn(2+) is bound by residues lysine 201 and histidine 220. Aspartate 257 provides a ligand contact to Mn(2+). Positions 285, 323, and 448 each coordinate ATP. Arginine 323 is a substrate binding site.

This sequence belongs to the phosphoenolpyruvate carboxykinase (ATP) family. It depends on Mn(2+) as a cofactor.

It is found in the cytoplasm. The catalysed reaction is oxaloacetate + ATP = phosphoenolpyruvate + ADP + CO2. Its pathway is carbohydrate biosynthesis; gluconeogenesis. Functionally, involved in the gluconeogenesis. Catalyzes the conversion of oxaloacetate (OAA) to phosphoenolpyruvate (PEP) through direct phosphoryl transfer between the nucleoside triphosphate and OAA. The protein is Phosphoenolpyruvate carboxykinase (ATP) of Parvibaculum lavamentivorans (strain DS-1 / DSM 13023 / NCIMB 13966).